The following is a 163-amino-acid chain: Shikimate kinase (163 aa).

10 to 15 serves as a coordination point for ATP; it reads GVGKTT. Mg(2+) is bound at residue T14. Residues D28, R52, and G75 each contribute to the substrate site. R116 serves as a coordination point for ATP. Position 134 (R134) interacts with substrate.

This sequence belongs to the shikimate kinase family. As to quaternary structure, monomer. It depends on Mg(2+) as a cofactor.

It is found in the cytoplasm. It carries out the reaction shikimate + ATP = 3-phosphoshikimate + ADP + H(+). Its pathway is metabolic intermediate biosynthesis; chorismate biosynthesis; chorismate from D-erythrose 4-phosphate and phosphoenolpyruvate: step 5/7. Catalyzes the specific phosphorylation of the 3-hydroxyl group of shikimic acid using ATP as a cosubstrate. The protein is Shikimate kinase of Streptococcus suis (strain 98HAH33).